A 793-amino-acid polypeptide reads, in one-letter code: Cation channel sperm-associated auxiliary subunit delta (793 aa).

The signal sequence occupies residues 1 to 20 (MLMLMLVAAVTMWLRPLVTA). Over 21 to 725 (QPLCRARTVR…AFPVQLVSAG (705 aa)) the chain is Extracellular. 7 disulfide bridges follow: Cys24–Cys370, Cys60–Cys146, Cys145–Cys153, Cys388–Cys497, Cys511–Cys703, Cys526–Cys573, and Cys625–Cys653. Asn128 carries an N-linked (GlcNAc...) asparagine glycan. Residues Asn231, Asn241, Asn473, Asn539, and Asn631 are each glycosylated (N-linked (GlcNAc...) asparagine). The chain crosses the membrane as a helical span at residues 726-747 (VVMVLLISSILGSVWLAYMIPR). Residues 748–793 (LLRTARGRRMTSFVAQLYGRCKTVCQFRASATARTGSKPMGRHRSS) lie on the Cytoplasmic side of the membrane.

Belongs to the CATSPERD family. As to quaternary structure, component of the CatSper complex or CatSpermasome composed of the core pore-forming members CATSPER1, CATSPER2, CATSPER3 and CATSPER4 as well as auxiliary members CATSPERB, CATSPERG, CATSPERD, CATSPERE, CATSPERZ, C2CD6/CATSPERT, TMEM249, TMEM262 and EFCAB9. HSPA1 may be an additional auxiliary complex member. The core complex members CATSPER1, CATSPER2, CATSPER3 and CATSPER4 form a heterotetrameric channel. The auxiliary CATSPERB, CATSPERG, CATSPERD and CATSPERE subunits form a pavilion-like structure over the pore which stabilizes the complex through interactions with CATSPER4, CATSPER3, CATSPER1 and CATSPER2 respectively. TMEM262/CATSPERH interacts with CATSPERB, further stabilizing the complex. C2CD6/CATSPERT interacts at least with CATSPERD and is required for targeting the CatSper complex in the flagellar membrane.

It localises to the cell projection. The protein resides in the cilium. Its subcellular location is the flagellum membrane. Functionally, auxiliary component of the CatSper complex, a complex involved in sperm cell hyperactivation. Sperm cell hyperactivation is needed for sperm motility which is essential late in the preparation of sperm for fertilization. Required for CATSPER1 stability before intraflagellar transport and/or incorporation of the CatSper complex channel into the flagellar membrane. The polypeptide is Cation channel sperm-associated auxiliary subunit delta (Macaca fascicularis (Crab-eating macaque)).